A 1101-amino-acid polypeptide reads, in one-letter code: Carbamoyl phosphate synthase large chain (1101 aa).

The interval 1-402 (MPKRTDLKSV…ALQKALRSLE (402 aa)) is carboxyphosphate synthetic domain. ATP-binding residues include arginine 129, arginine 169, glycine 175, glycine 176, glutamate 208, isoleucine 210, glutamate 215, glycine 241, valine 242, histidine 243, glutamine 285, and glutamate 299. The 196-residue stretch at 133 to 328 (KGVVERAGGE…IAKIATKLAL (196 aa)) folds into the ATP-grasp 1 domain. Mg(2+) contacts are provided by glutamine 285, glutamate 299, and asparagine 301. 3 residues coordinate Mn(2+): glutamine 285, glutamate 299, and asparagine 301. Residues 403 to 544 (QKGSELAFPQ…YRYSSYDLET (142 aa)) form an oligomerization domain region. Residues 545-947 (EVAPHEGESV…AFAKSQSAAG (403 aa)) form a carbamoyl phosphate synthetic domain region. The 192-residue stretch at 675-866 (ALVLERAGLV…LAKAAARIGV (192 aa)) folds into the ATP-grasp 2 domain. 10 residues coordinate ATP: arginine 711, arginine 750, leucine 752, glutamate 757, glycine 782, isoleucine 783, histidine 784, serine 785, glutamine 825, and glutamate 837. Residues glutamine 825, glutamate 837, and asparagine 839 each coordinate Mg(2+). Mn(2+) contacts are provided by glutamine 825, glutamate 837, and asparagine 839. An MGS-like domain is found at 948-1093 (GPLPTSGRVF…QEHDARLQQA (146 aa)). Positions 948-1101 (GPLPTSGRVF…QAVAGPEAAA (154 aa)) are allosteric domain.

It belongs to the CarB family. As to quaternary structure, composed of two chains; the small (or glutamine) chain promotes the hydrolysis of glutamine to ammonia, which is used by the large (or ammonia) chain to synthesize carbamoyl phosphate. Tetramer of heterodimers (alpha,beta)4. The cofactor is Mg(2+). Mn(2+) is required as a cofactor.

The catalysed reaction is hydrogencarbonate + L-glutamine + 2 ATP + H2O = carbamoyl phosphate + L-glutamate + 2 ADP + phosphate + 2 H(+). It catalyses the reaction hydrogencarbonate + NH4(+) + 2 ATP = carbamoyl phosphate + 2 ADP + phosphate + 2 H(+). It participates in amino-acid biosynthesis; L-arginine biosynthesis; carbamoyl phosphate from bicarbonate: step 1/1. Its pathway is pyrimidine metabolism; UMP biosynthesis via de novo pathway; (S)-dihydroorotate from bicarbonate: step 1/3. In terms of biological role, large subunit of the glutamine-dependent carbamoyl phosphate synthetase (CPSase). CPSase catalyzes the formation of carbamoyl phosphate from the ammonia moiety of glutamine, carbonate, and phosphate donated by ATP, constituting the first step of 2 biosynthetic pathways, one leading to arginine and/or urea and the other to pyrimidine nucleotides. The large subunit (synthetase) binds the substrates ammonia (free or transferred from glutamine from the small subunit), hydrogencarbonate and ATP and carries out an ATP-coupled ligase reaction, activating hydrogencarbonate by forming carboxy phosphate which reacts with ammonia to form carbamoyl phosphate. The sequence is that of Carbamoyl phosphate synthase large chain from Micrococcus luteus (strain ATCC 4698 / DSM 20030 / JCM 1464 / CCM 169 / CCUG 5858 / IAM 1056 / NBRC 3333 / NCIMB 9278 / NCTC 2665 / VKM Ac-2230) (Micrococcus lysodeikticus).